The sequence spans 323 residues: Oligodendrocyte transcription factor 2 (323 aa).

2 stretches are compositionally biased toward polar residues: residues 1 to 13 (MDSD…SRPS) and 27 to 45 (KGSS…STPS). The disordered stretch occupies residues 1–107 (MDSDASLVSS…KKQMTEPELQ (107 aa)). Positions 76–93 (KSSSSSTSSSTSSAAASS) are enriched in low complexity. A bHLH domain is found at 108–162 (QLRLKINSRERKRMHDLNIAMDGLREVMPYAHGPSVRKLSKIATLLLARNYILML).

In terms of assembly, interacts with NKX2-2. Interacts with ZNF488. Expressed in the brain, in oligodendrocytes. Strongly expressed in oligodendrogliomas, while expression is weak to moderate in astrocytomas. Expression in glioblastomas highly variable.

The protein localises to the nucleus. It is found in the cytoplasm. Functionally, required for oligodendrocyte and motor neuron specification in the spinal cord, as well as for the development of somatic motor neurons in the hindbrain. Functions together with ZNF488 to promote oligodendrocyte differentiation. Cooperates with OLIG1 to establish the pMN domain of the embryonic neural tube. Antagonist of V2 interneuron and of NKX2-2-induced V3 interneuron development. The chain is Oligodendrocyte transcription factor 2 (OLIG2) from Homo sapiens (Human).